The chain runs to 265 residues: Ribosomal RNA small subunit methyltransferase A (265 aa).

S-adenosyl-L-methionine contacts are provided by His-13, Leu-15, Gly-40, Glu-61, Asp-85, and Asn-103.

The protein belongs to the class I-like SAM-binding methyltransferase superfamily. rRNA adenine N(6)-methyltransferase family. RsmA subfamily.

The protein resides in the cytoplasm. It carries out the reaction adenosine(1518)/adenosine(1519) in 16S rRNA + 4 S-adenosyl-L-methionine = N(6)-dimethyladenosine(1518)/N(6)-dimethyladenosine(1519) in 16S rRNA + 4 S-adenosyl-L-homocysteine + 4 H(+). Functionally, specifically dimethylates two adjacent adenosines (A1518 and A1519) in the loop of a conserved hairpin near the 3'-end of 16S rRNA in the 30S particle. May play a critical role in biogenesis of 30S subunits. In Bordetella pertussis (strain Tohama I / ATCC BAA-589 / NCTC 13251), this protein is Ribosomal RNA small subunit methyltransferase A.